The following is a 113-amino-acid chain: Protein AV2 (113 aa).

Positions 94-113 (SKTGLGEQAHVQKAHDVQDV) are disordered.

It belongs to the geminiviridae protein AV2/V2 family. In terms of assembly, interacts with host SGS3.

It localises to the host cytoplasm. The protein resides in the host perinuclear region. Through its interaction with host SGS3, acts as a suppressor of RNA-mediated gene silencing, also known as post-transcriptional gene silencing (PTGS), a mechanism of plant viral defense that limits the accumulation of viral RNAs. In African cassava mosaic virus (isolate West Kenyan 844) (ACMV), this protein is Protein AV2.